Reading from the N-terminus, the 355-residue chain is Histidinol-phosphate aminotransferase (355 aa).

N6-(pyridoxal phosphate)lysine is present on lysine 218.

It belongs to the class-II pyridoxal-phosphate-dependent aminotransferase family. Histidinol-phosphate aminotransferase subfamily. Homodimer. Pyridoxal 5'-phosphate serves as cofactor.

The catalysed reaction is L-histidinol phosphate + 2-oxoglutarate = 3-(imidazol-4-yl)-2-oxopropyl phosphate + L-glutamate. The protein operates within amino-acid biosynthesis; L-histidine biosynthesis; L-histidine from 5-phospho-alpha-D-ribose 1-diphosphate: step 7/9. This chain is Histidinol-phosphate aminotransferase, found in Chlorobaculum parvum (strain DSM 263 / NCIMB 8327) (Chlorobium vibrioforme subsp. thiosulfatophilum).